Consider the following 176-residue polypeptide: Small ribosomal subunit protein uS5 (176 aa).

The S5 DRBM domain occupies phenylalanine 18–valine 81.

Belongs to the universal ribosomal protein uS5 family. As to quaternary structure, part of the 30S ribosomal subunit. Contacts proteins S4 and S8.

With S4 and S12 plays an important role in translational accuracy. Its function is as follows. Located at the back of the 30S subunit body where it stabilizes the conformation of the head with respect to the body. This chain is Small ribosomal subunit protein uS5, found in Deinococcus deserti (strain DSM 17065 / CIP 109153 / LMG 22923 / VCD115).